The chain runs to 92 residues: Acylphosphatase (92 aa).

The Acylphosphatase-like domain occupies 5–92 (RAHVVVSGKV…GEFSGFKIAF (88 aa)). Active-site residues include Arg-20 and Asn-38.

Belongs to the acylphosphatase family.

The enzyme catalyses an acyl phosphate + H2O = a carboxylate + phosphate + H(+). The polypeptide is Acylphosphatase (acyP) (Pelotomaculum thermopropionicum (strain DSM 13744 / JCM 10971 / SI)).